The chain runs to 806 residues: Volume-regulated anion channel subunit LRRC8E (806 aa).

The Cytoplasmic segment spans residues 1–22 (MIPVAEFKQFTEQQPAFKVLKP). The chain crosses the membrane as a helical span at residues 23-43 (WWDVLAEYITYAMLMIGVFGC). Over 44-130 (TLQVTQDKII…YETALHWYAK (87 aa)) the chain is Extracellular. A disulfide bond links Cys54 and Cys311. 2 N-linked (GlcNAc...) asparagine glycosylation sites follow: Asn57 and Asn80. Positions 72-81 (YDQQSPPSND) are enriched in polar residues. The segment at 72 to 103 (YDQQSPPSNDSDLETTIPPPTATSSPPREMSG) is disordered. A helical membrane pass occupies residues 131-151 (YFPYLVVIHTLIFIICGNFWF). Topologically, residues 152–275 (KFPGTSSKIE…MRQTVLKVCK (124 aa)) are cytoplasmic. The disordered stretch occupies residues 182–213 (EVSGESSQEKPSQERSIDRELSKPNFEEGSPA). A compositionally biased stretch (basic and acidic residues) spans 188–207 (SQEKPSQERSIDRELSKPNF). Residues 276 to 296 (FVLITIYNAVLVGKIHFIVPC) form a helical membrane-spanning segment. The Extracellular segment spans residues 297–323 (SVHTEDMTGYNSFCCNHTKAHLFSKLA). Asn312 is a glycosylation site (N-linked (GlcNAc...) asparagine). The chain crosses the membrane as a helical span at residues 324 to 344 (ITYLCFLGVYGLTCLYTLYWL). Residues 345-806 (FRRPLKEYSF…VEVRDKLKED (462 aa)) are Cytoplasmic-facing. 10 LRR repeats span residues 544-566 (LKSL…VADV), 569-589 (HLQK…NALK), 593-614 (LVKE…VFSL), 616-637 (NLQV…ISLQ), 641-662 (KLSV…IRKL), 664-685 (GLEE…LFLC), 687-708 (KLRH…IGVL), 710-731 (LLQY…LFFC), 733-754 (KLKT…VGSL), and 756-777 (CLVK…LGNC).

This sequence belongs to the LRRC8 family. Heterohexamer; oligomerizes with other LRRC8 proteins (lrrc8a, lrrc8c, lrrc8d and/or lrrc8b) to form a heterohexamer. Detected in a channel complex that contains lrrc8a, lrrc8c and lrrc8e. In vivo, the subunit composition may depend primarily on expression levels, and heterooligomeric channels containing various proportions of the different LRRC8 proteins may coexist.

It is found in the cell membrane. The protein resides in the endoplasmic reticulum membrane. The protein localises to the lysosome membrane. The enzyme catalyses chloride(in) = chloride(out). The catalysed reaction is iodide(out) = iodide(in). It carries out the reaction taurine(out) = taurine(in). It catalyses the reaction 2',3'-cGAMP(out) = 2',3'-cGAMP(in). Functionally, non-essential component of the volume-regulated anion channel (VRAC, also named VSOAC channel), an anion channel required to maintain a constant cell volume in response to extracellular or intracellular osmotic changes. The VRAC channel conducts iodide better than chloride and can also conduct organic osmolytes like taurine. Mediates efflux of amino acids, such as aspartate, in response to osmotic stress. The VRAC channel also mediates transport of immunoreactive cyclic dinucleotide GMP-AMP (2'-3'-cGAMP), an immune messenger produced in response to DNA virus in the cytosol. Channel activity requires lrrc8a plus at least one other family member (lrrc8b, lrrc8c, lrrc8d or lrrc8e); channel characteristics depend on the precise subunit composition. Also plays a role in lysosome homeostasis by forming functional lysosomal VRAC channels in response to low cytoplasmic ionic strength condition: lysosomal VRAC channels are necessary for the formation of large lysosome-derived vacuoles, which store and then expel excess water to maintain cytosolic water homeostasis. The protein is Volume-regulated anion channel subunit LRRC8E of Xenopus tropicalis (Western clawed frog).